A 165-amino-acid polypeptide reads, in one-letter code: Calcium-binding protein H (165 aa).

EF-hand domains lie at 7-42 (QIEKDVEKIIGQYDGDKNGEVTINEAIEFFKRMGSK), 43-78 (YPEKCAIVLFKMYDLDNEGKISYDEIQEEIFKRYQD), 88-123 (YFQDDIEAFLLRYDKNRDNRIDFKELEQCFESIGSD), and 124-159 (HPKENANHIFTEIDKNRDGYLTIAEIKNYCRNTIRS). Asp-20, Asp-22, Asn-24, Glu-26, Glu-31, Asp-56, Asp-58, Glu-60, Lys-62, Glu-67, Asp-101, Asn-103, Asp-105, Arg-107, Glu-112, Asp-137, Asn-139, Asp-141, Tyr-143, and Glu-148 together coordinate Ca(2+).

This chain is Calcium-binding protein H (cbpH), found in Dictyostelium discoideum (Social amoeba).